A 200-amino-acid chain; its full sequence is Imidazoleglycerol-phosphate dehydratase (200 aa).

This sequence belongs to the imidazoleglycerol-phosphate dehydratase family.

It is found in the cytoplasm. It carries out the reaction D-erythro-1-(imidazol-4-yl)glycerol 3-phosphate = 3-(imidazol-4-yl)-2-oxopropyl phosphate + H2O. It functions in the pathway amino-acid biosynthesis; L-histidine biosynthesis; L-histidine from 5-phospho-alpha-D-ribose 1-diphosphate: step 6/9. The polypeptide is Imidazoleglycerol-phosphate dehydratase (Chlorobium luteolum (strain DSM 273 / BCRC 81028 / 2530) (Pelodictyon luteolum)).